Reading from the N-terminus, the 118-residue chain is T cell receptor gamma variable 8 (118 aa).

Positions 1–17 (MLLALALLLAFLPPASQ) are cleaved as a signal peptide. One can recognise an Ig-like domain in the interval 18–118 (KSSNLEGRTK…GVYYCATWDR (101 aa)). Cys-41 and Cys-113 form a disulfide bridge.

In terms of assembly, gamma-delta TR is a heterodimer composed of a gamma and delta chain; disulfide-linked. The gamma-delta TR is associated with the transmembrane signaling CD3 coreceptor proteins following the stoichiometry: a single gamma-delta TR heterodimer associates with one CD3D-CD3E heterodimer, one CD3G-CD3E heterodimer and one CD247 homodimer forming a stable octameric structure. Upon activation, gamma-delta TR complex associates with FCER1G to initiate intracellular signaling.

Its subcellular location is the cell membrane. Its function is as follows. V region of the variable domain of T cell receptor (TR) gamma chain that participates in the antigen recognition. Gamma-delta TRs recognize a variety of self and foreign non-peptide antigens frequently expressed at the epithelial boundaries between the host and external environment, including endogenous lipids presented by MH-like protein CD1D and phosphoantigens presented by butyrophilin-like molecule BTN3A1. Upon antigen recognition induces rapid, innate-like immune responses involved in pathogen clearance and tissue repair. Binding of gamma-delta TR complex to antigen triggers phosphorylation of immunoreceptor tyrosine-based activation motifs (ITAMs) in the CD3 chains by the LCK and FYN kinases, allowing the recruitment, phosphorylation, and activation of ZAP70 that facilitates phosphorylation of the scaffolding proteins LCP2 and LAT. This lead to the formation of a supramolecular signalosome that recruits the phospholipase PLCG1, resulting in calcium mobilization and ERK activation, ultimately leading to T cell expansion and differentiation into effector cells. Gamma-delta TRs are produced through somatic rearrangement of a limited repertoire of variable (V), diversity (D), and joining (J) genes. The potential diversity of gamma-delta TRs is conferred by the unique ability to rearrange (D) genes in tandem and to utilize all three reading frames. The combinatorial diversity is considerably increased by the sequence exonuclease trimming and random nucleotide (N) region additions which occur during the V-(D)-J rearrangements. The chain is T cell receptor gamma variable 8 from Homo sapiens (Human).